Reading from the N-terminus, the 207-residue chain is MQIGLDFNLVEDLVAGVDEVGRGPLCGAVVTAAVILDPARPILGLNDSKKLTEARREALFDEICEKALSFCIARAEVEEIDSLNILQATMLAMQRAVEGLHITPKLALIDGNRCPKLAVPAAPVVKGDSQVPAIAAASILAKVTRDREMSAFELIYPGYGIGGHKGYPTPVHLEALARLGPTPIHRRSFAPVRAAWEVREGVTDSLI.

Residues 12–201 (DLVAGVDEVG…VRAAWEVREG (190 aa)) form the RNase H type-2 domain. The a divalent metal cation site is built by D18, E19, and D110.

The protein belongs to the RNase HII family. Mn(2+) is required as a cofactor. The cofactor is Mg(2+).

Its subcellular location is the cytoplasm. It carries out the reaction Endonucleolytic cleavage to 5'-phosphomonoester.. Its function is as follows. Endonuclease that specifically degrades the RNA of RNA-DNA hybrids. The protein is Ribonuclease HII of Pseudomonas putida (strain ATCC 700007 / DSM 6899 / JCM 31910 / BCRC 17059 / LMG 24140 / F1).